We begin with the raw amino-acid sequence, 494 residues long: Neuronal acetylcholine receptor subunit alpha-6 (494 aa).

An N-terminal signal peptide occupies residues 1-25 (MLTSKGQGFLHGGLCLWLCVFTPFF). Over 26-239 (KGCVGCATEE…ITYSFYIRRL (214 aa)) the chain is Extracellular. Residues N54 and N171 are each glycosylated (N-linked (GlcNAc...) asparagine). Cystine bridges form between C158–C172 and C222–C223. Transmembrane regions (helical) follow at residues 240-264 (PMFYTINLIIPCLFISFLTVLVFYL), 272-290 (VTLCISVLLSLTVFLLVIT), and 306-327 (YLLFTMIFVTLSIVVTVFVLNI). At 328-465 (HYRTPTTHTM…WKYVAMVVDR (138 aa)) the chain is on the cytoplasmic side. At S401 the chain carries Phosphoserine. The helical transmembrane segment at 466–484 (VFLWVFIIVCVFGTAGLFL) threads the bilayer.

It belongs to the ligand-gated ion channel (TC 1.A.9) family. Acetylcholine receptor (TC 1.A.9.1) subfamily. Alpha-6/CHRNA6 sub-subfamily. As to quaternary structure, neuronal AChR is composed of two different types of subunits: alpha and non-alpha (beta). CHRNA6/alpha-6 subunit can be combined to CHRNB2/beta-2, CHRNA4/alpha-4 and CHRNB3/beta-3 to give rise to functional receptors. Heteropentamers containing CHRNB3 have an stoichiometry of (CHRNA6:CHRNB2)2:CHRNB3. Interacts with LYPD6.

It is found in the synaptic cell membrane. The catalysed reaction is Ca(2+)(in) = Ca(2+)(out). It catalyses the reaction K(+)(in) = K(+)(out). It carries out the reaction Na(+)(in) = Na(+)(out). With respect to regulation, activated by a myriad of ligands such as acetylcholine, cytisine and nicotine. CHRNA6 nAChR activity is inhibited by the antagonists alpha-conotoxin MII and PIA, a small disulfide-constrained peptides from cone snails. Component of neuronal acetylcholine receptors (nAChRs) that function as pentameric, ligand-gated cation channels with high calcium permeability among other activities. nAChRs are excitatory neurotrasnmitter receptors formed by a collection of nAChR subunits known to mediate synaptic transmission in the nervous system and the neuromuscular junction. Each nAchR subunit confers differential attributes to channel properties, including activation, deactivation and desensitization kinetics, pH sensitivity, cation permeability, and binding to allosteric modulators. CHRNA6 forms pentameric channels with CHRNB2, CHRNB3 and CHRNA4 that exhibit high sensitivity to ACh and nicotine and are predominantly expressed in only a few brain areas, including dopaminergic neurons, norepirephrine neurons and cells of the visual system. nAChrs containing CHRNA6 subunits mediate endogenous cholinergic modulation of dopamine and gamma-aminobutyric acid (GABA) release in response to nicotine at nerve terminals. The polypeptide is Neuronal acetylcholine receptor subunit alpha-6 (Homo sapiens (Human)).